The following is a 242-amino-acid chain: tRNA pseudouridine synthase A (242 aa).

The active-site Nucleophile is the Asp-51. Tyr-107 contacts substrate.

The protein belongs to the tRNA pseudouridine synthase TruA family. As to quaternary structure, homodimer.

The enzyme catalyses uridine(38/39/40) in tRNA = pseudouridine(38/39/40) in tRNA. Functionally, formation of pseudouridine at positions 38, 39 and 40 in the anticodon stem and loop of transfer RNAs. In Helicobacter pylori (strain HPAG1), this protein is tRNA pseudouridine synthase A.